The primary structure comprises 647 residues: DNA ligase (647 aa).

Residues 30–34, 79–80, and glutamate 105 contribute to the NAD(+) site; these read DEEYD and SM. Lysine 107 functions as the N6-AMP-lysine intermediate in the catalytic mechanism. NAD(+)-binding residues include arginine 128, glutamate 162, and lysine 301. Positions 395, 398, 411, and 416 each coordinate Zn(2+). The region spanning 570 to 647 is the BRCT domain; that stretch reads KSDGVIFGKT…ESAFNELVKE (78 aa).

This sequence belongs to the NAD-dependent DNA ligase family. LigA subfamily. The cofactor is Mg(2+). Mn(2+) serves as cofactor.

It catalyses the reaction NAD(+) + (deoxyribonucleotide)n-3'-hydroxyl + 5'-phospho-(deoxyribonucleotide)m = (deoxyribonucleotide)n+m + AMP + beta-nicotinamide D-nucleotide.. Functionally, DNA ligase that catalyzes the formation of phosphodiester linkages between 5'-phosphoryl and 3'-hydroxyl groups in double-stranded DNA using NAD as a coenzyme and as the energy source for the reaction. It is essential for DNA replication and repair of damaged DNA. In Campylobacter jejuni subsp. jejuni serotype O:6 (strain 81116 / NCTC 11828), this protein is DNA ligase.